We begin with the raw amino-acid sequence, 164 residues long: 2-C-methyl-D-erythritol 2,4-cyclodiphosphate synthase (164 aa).

Residues D9 and H11 each coordinate a divalent metal cation. 4-CDP-2-C-methyl-D-erythritol 2-phosphate contacts are provided by residues 9-11 (DVH) and 35-36 (HS). H43 contributes to the a divalent metal cation binding site. 4-CDP-2-C-methyl-D-erythritol 2-phosphate is bound by residues 57-59 (DIG), 62-66 (FPDTD), 133-136 (TTTE), F140, and R143.

This sequence belongs to the IspF family. As to quaternary structure, homotrimer. It depends on a divalent metal cation as a cofactor.

It carries out the reaction 4-CDP-2-C-methyl-D-erythritol 2-phosphate = 2-C-methyl-D-erythritol 2,4-cyclic diphosphate + CMP. It participates in isoprenoid biosynthesis; isopentenyl diphosphate biosynthesis via DXP pathway; isopentenyl diphosphate from 1-deoxy-D-xylulose 5-phosphate: step 4/6. Involved in the biosynthesis of isopentenyl diphosphate (IPP) and dimethylallyl diphosphate (DMAPP), two major building blocks of isoprenoid compounds. Catalyzes the conversion of 4-diphosphocytidyl-2-C-methyl-D-erythritol 2-phosphate (CDP-ME2P) to 2-C-methyl-D-erythritol 2,4-cyclodiphosphate (ME-CPP) with a corresponding release of cytidine 5-monophosphate (CMP). In Syntrophotalea carbinolica (strain DSM 2380 / NBRC 103641 / GraBd1) (Pelobacter carbinolicus), this protein is 2-C-methyl-D-erythritol 2,4-cyclodiphosphate synthase.